The sequence spans 625 residues: DNA-directed RNA polymerase subunit gamma (625 aa).

Residues Cys71, Cys73, Cys86, and Cys89 each coordinate Zn(2+). Mg(2+)-binding residues include Asp467, Asp469, and Asp471.

Belongs to the RNA polymerase beta' chain family. RpoC1 subfamily. As to quaternary structure, in cyanobacteria the RNAP catalytic core is composed of 2 alpha, 1 beta, 1 beta', 1 gamma and 1 omega subunit. When a sigma factor is associated with the core the holoenzyme is formed, which can initiate transcription. The cofactor is Mg(2+). Zn(2+) is required as a cofactor.

It catalyses the reaction RNA(n) + a ribonucleoside 5'-triphosphate = RNA(n+1) + diphosphate. DNA-dependent RNA polymerase catalyzes the transcription of DNA into RNA using the four ribonucleoside triphosphates as substrates. The sequence is that of DNA-directed RNA polymerase subunit gamma from Nostoc punctiforme (strain ATCC 29133 / PCC 73102).